Here is a 287-residue protein sequence, read N- to C-terminus: Inhibitory synaptic factor 1 (287 aa).

The tract at residues 1–22 (MSQSRAPAREPSETPSQREQIR) is disordered. A coiled-coil region spans residues 25–58 (MKMVIQQLEGILKELKDVAHELREVVGQIDKLTS). Disordered stretches follow at residues 113–174 (RRSA…GTRE) and 189–287 (CDDD…NKDL). A compositionally biased stretch (low complexity) spans 153-167 (EEASSSTHSQSQKTS). Positions 189–209 (CDDDEDEDEDEDGRDEEEDKL) are enriched in acidic residues. A compositionally biased stretch (polar residues) spans 259 to 274 (RNSSTQTVSDKSTQTL).

The protein belongs to the INSYN1 family.

It is found in the postsynaptic density. In terms of biological role, may be a component of the protein machinery at the inhibitory synapses, probably acting as a scaffold. This is Inhibitory synaptic factor 1 from Danio rerio (Zebrafish).